A 1076-amino-acid polypeptide reads, in one-letter code: MHIATFPALAITALALVLWATVATHSSNTNSCHMSYMKPDMIAMTGFNTTQTPLAHKYSLHLYRELDVDLSREVGGRPVLFVPGNGGSMRQIRSIAGEAAVQYWHDPRRAGADADTWANGSTARPKSALQKLNTFAFGDTESDTEGVRGLGDAVTARDMSGDDRRDAVERPLSNGKLPSQWPDDLPLDFFTVNFQEDLTAFDGTTVIDQAEYLNQAIAYILSLYSSHPNPPTSVIVIGHSMGGIVARTMVTLDSYIHGSINTILTLATPHVLPPVSFDKGIVGLYHNVNEFWKTETVPGGKLEDTLLVSVTGGIRDQMIPAEYSSVDTFLPPTNGFAVATTSIPDVWMSIDHQAMVWCHQLRRVVAETLLVVAGETTEKVSTRLDTFQEYFLSGMERVEKKAQNASESSKLTLDTLVSINTPLTTTSNIIINDHSPNQLVKTKSYFKFPVLKASEINEMSRSFAMPVDKGKSLLVKTNMPLEDLHILVCRTNTGDVDTNGFSFLRYGSKSKGVRVGTDTLVCANVAGEAVAMPSSIKYATGAKIPEEEETGEDNDIPVDSAISSTSLSEYIQLDASSLSGFQYVVVIDNTMSETISSDSYLLAEMALPSDMAVVAAPTWWEVLKVGRFTIELPEKRALLTKISLPHFWSSLVAFSIRLSTSDSFSMEYQCEAKKSMGSEHDVLFAPLLMQYSAQLHEAKFSTNLCGGYEQGTRVAVHGGAPYMPLAEGRDVSGTELYLWTDSSSRSSESLSLTLEIDLWGSLGRFLGFYRVMFAIFPMFVFLCLLMIQLRVWTTTELFVSLSDALDVFVDFQLPWILAGSCAIPFVPHVLVSLLYPQMSQPGQFFLGLNGTHLWFLGPVSLVIATGIVVVLHWLLQILTLWVCQCYYMLGLAPIAPESPFSVRRIVTISFLLLLVFKIVPHQFAFMVAVLVMAMGAGKARVGRLMQSEDKDNKSEPCVVIDRNLINYTHSLLLLLVLLLPINAPTLVVWLHNMANKWHTPLESHHEVSAILPILLLVLTASRGIMIRLPQSKRAIYATFAFLAYFALFVLFHGVVHSYRLHLLTNGLCLCLLYLSL.

The helical transmembrane segment at 3–23 threads the bilayer; it reads IATFPALAITALALVLWATVA. Residues Asn48 and Asn119 are each glycosylated (N-linked (GlcNAc...) asparagine). Residue Ser240 is part of the active site. The N-linked (GlcNAc...) asparagine glycan is linked to Asn404. The next 2 membrane-spanning stretches (helical) occupy residues 765 to 785 and 815 to 835; these read FLGFYRVMFAIFPMFVFLCLL and WILAGSCAIPFVPHVLVSLLY. Asn849 carries N-linked (GlcNAc...) asparagine glycosylation. The next 3 helical transmembrane spans lie at 855 to 875, 877 to 897, and 910 to 930; these read FLGPVSLVIATGIVVVLHWLL, ILTLWVCQCYYMLGLAPIAPE, and FLLLLVFKIVPHQFAFMVAVL. N-linked (GlcNAc...) asparagine glycosylation is found at Asn952 and Asn966. The next 3 helical transmembrane spans lie at 970–990, 1006–1026, and 1035–1055; these read SLLLLLVLLLPINAPTLVVWL, EVSAILPILLLVLTASRGIMI, and IYATFAFLAYFALFVLFHGVV.

The protein belongs to the GPI inositol-deacylase family.

It is found in the endoplasmic reticulum membrane. Its function is as follows. Involved in inositol deacylation of GPI-anchored proteins which plays important roles in the quality control and ER-associated degradation of GPI-anchored proteins. The sequence is that of GPI inositol-deacylase A (BST1A) from Yarrowia lipolytica (strain CLIB 122 / E 150) (Yeast).